The sequence spans 832 residues: DEAD-box ATP-dependent RNA helicase 13 (832 aa).

The segment covering 1-12 (MAAAPPPPPPPQ) has biased composition (pro residues). 2 disordered regions span residues 1 to 59 (MAAA…TMVE) and 91 to 173 (VEDL…DDNV). The span at 29–42 (RKGKKSRGAKKPRR) shows a compositional bias: basic residues. The segment covering 43–55 (AAAAAAASTSSAG) has biased composition (low complexity). The span at 105–114 (QKKKKRKKRK) shows a compositional bias: basic residues. The span at 128-137 (LVVECEEEGE) shows a compositional bias: acidic residues. Over residues 141–155 (KRVKKKRRSRKKRKV) the composition is skewed to basic residues. The segment covering 156–167 (KEMEEKMESKED) has biased composition (basic and acidic residues). Positions 198–226 (YAWRELRLHPLLITAVRRLGFKEPTPIQK) match the Q motif motif. In terms of domain architecture, Helicase ATP-binding spans 230 to 447 (PAAAHQGKDV…KLKRGLVTAK (218 aa)). Residue 243-250 (AETGSGKT) coordinates ATP. Residues 371-374 (DEAD) carry the DEAD box motif. In terms of domain architecture, Helicase C-terminal spans 484–645 (KLEESFIECS…QFPVDHAYMP (162 aa)). Positions 800 to 832 (RRLAENWRRKKQKEKKSTREQKRKEKRIAKERD) are disordered. Residues 814 to 832 (KKSTREQKRKEKRIAKERD) are compositionally biased toward basic and acidic residues.

This sequence belongs to the DEAD box helicase family. DDX24/MAK5 subfamily.

It catalyses the reaction ATP + H2O = ADP + phosphate + H(+). This is DEAD-box ATP-dependent RNA helicase 13 from Oryza sativa subsp. japonica (Rice).